A 241-amino-acid chain; its full sequence is Proteasome subunit alpha (241 aa).

Belongs to the peptidase T1A family. In terms of assembly, the 20S proteasome core is composed of 14 alpha and 14 beta subunits that assemble into four stacked heptameric rings, resulting in a barrel-shaped structure. The two inner rings, each composed of seven catalytic beta subunits, are sandwiched by two outer rings, each composed of seven alpha subunits. The catalytic chamber with the active sites is on the inside of the barrel. Has a gated structure, the ends of the cylinder being occluded by the N-termini of the alpha-subunits. Is capped by the proteasome-associated ATPase, ARC.

The protein localises to the cytoplasm. It functions in the pathway protein degradation; proteasomal Pup-dependent pathway. Its activity is regulated as follows. The formation of the proteasomal ATPase ARC-20S proteasome complex, likely via the docking of the C-termini of ARC into the intersubunit pockets in the alpha-rings, may trigger opening of the gate for substrate entry. Interconversion between the open-gate and close-gate conformations leads to a dynamic regulation of the 20S proteasome proteolysis activity. Component of the proteasome core, a large protease complex with broad specificity involved in protein degradation. This chain is Proteasome subunit alpha, found in Parafrankia sp. (strain EAN1pec).